The primary structure comprises 150 residues: Deoxyuridine 5'-triphosphate nucleotidohydrolase (150 aa).

Substrate is bound by residues 69–71 (RSG), Asn-82, and 86–88 (TID).

It belongs to the dUTPase family. Mg(2+) serves as cofactor.

It catalyses the reaction dUTP + H2O = dUMP + diphosphate + H(+). It functions in the pathway pyrimidine metabolism; dUMP biosynthesis; dUMP from dCTP (dUTP route): step 2/2. This enzyme is involved in nucleotide metabolism: it produces dUMP, the immediate precursor of thymidine nucleotides and it decreases the intracellular concentration of dUTP so that uracil cannot be incorporated into DNA. This Syntrophus aciditrophicus (strain SB) protein is Deoxyuridine 5'-triphosphate nucleotidohydrolase.